Consider the following 118-residue polypeptide: Large ribosomal subunit protein bL20 (118 aa).

It belongs to the bacterial ribosomal protein bL20 family.

In terms of biological role, binds directly to 23S ribosomal RNA and is necessary for the in vitro assembly process of the 50S ribosomal subunit. It is not involved in the protein synthesizing functions of that subunit. The polypeptide is Large ribosomal subunit protein bL20 (Kosmotoga olearia (strain ATCC BAA-1733 / DSM 21960 / TBF 19.5.1)).